The primary structure comprises 285 residues: MSANDNWYIEHFQPTGSAIGFRISGKLDEVQSPFQKIEIYQTTDWGKLMLIDGAVMLTSRDNFFYHEMISHPALFTHPAPKRVVIIGGGDCGTLREVLKHPGVESATQCDIDEQVTRMSEKYFPELCDSNHDARAELLFDDGVAYMANCQAGSVDIVIVDSTDPVGPAEGLFNKAFYESCFKALKDDGILVQQSESPLALLDLINEMRTEMGKAGFQSFKTLPFPQPCYPTGWWSVTMASKQAKADFAFRQDAAQAKGFDTLYYTAHLHTGVLVAPPFVAKALGE.

The PABS domain maps to 5–241 (DNWYIEHFQP…GWWSVTMASK (237 aa)). An S-methyl-5'-thioadenosine-binding site is contributed by Gln35. Residues His66 and Asp90 each contribute to the spermidine site. S-methyl-5'-thioadenosine contacts are provided by residues Asp110 and 141 to 142 (DG). Asp160 serves as the catalytic Proton acceptor. 160 to 163 (DSTD) is a spermidine binding site. Pro167 contributes to the S-methyl-5'-thioadenosine binding site.

This sequence belongs to the spermidine/spermine synthase family. As to quaternary structure, homodimer or homotetramer.

The protein resides in the cytoplasm. It catalyses the reaction S-adenosyl 3-(methylsulfanyl)propylamine + putrescine = S-methyl-5'-thioadenosine + spermidine + H(+). The protein operates within amine and polyamine biosynthesis; spermidine biosynthesis; spermidine from putrescine: step 1/1. Catalyzes the irreversible transfer of a propylamine group from the amino donor S-adenosylmethioninamine (decarboxy-AdoMet) to putrescine (1,4-diaminobutane) to yield spermidine. This chain is Polyamine aminopropyltransferase, found in Xanthomonas axonopodis pv. citri (strain 306).